Reading from the N-terminus, the 163-residue chain is Centrosomal protein of 19 kDa (163 aa).

Belongs to the CEP19 family. In terms of assembly, interacts with CEP43; this interaction is required for its localization to the mother centriole. Interacts (via residues 121-150) with RABL2B. Interacts (via C-terminus) with CEP350; this interaction is required for its localization to the mother centriole.

It localises to the cytoplasm. Its subcellular location is the cytoskeleton. The protein resides in the microtubule organizing center. The protein localises to the centrosome. It is found in the centriole. It localises to the spindle pole. Its subcellular location is the cilium basal body. Functionally, required for ciliation. Recruits the RABL2B GTPase to the ciliary base to initiate ciliation. After specifically capturing the activated GTP-bound RABL2B, the CEP19-RABL2B complex binds intraflagellar transport (IFT) complex B from the large pool pre-docked at the base of the cilium and thus triggers its entry into the cilia. Involved in the early steps in cilia formation by recruiting the ciliary vesicles (CVs) to the distal end of the mother centriole where they fuse to initiate cilium assembly. Involved in microtubule (MT) anchoring at centrosomes. The chain is Centrosomal protein of 19 kDa (Cep19) from Rattus norvegicus (Rat).